Consider the following 137-residue polypeptide: Large ribosomal subunit protein uL14 (137 aa).

It belongs to the universal ribosomal protein uL14 family. As to quaternary structure, component of the large ribosomal subunit. Mature ribosomes consist of a small (40S) and a large (60S) subunit. The 40S subunit contains about 32 different proteins and 1 molecule of RNA (18S). The 60S subunit contains 45 different proteins and 3 molecules of RNA (25S, 5.8S and 5S).

Its subcellular location is the cytoplasm. Component of the ribosome, a large ribonucleoprotein complex responsible for the synthesis of proteins in the cell. The small ribosomal subunit (SSU) binds messenger RNAs (mRNAs) and translates the encoded message by selecting cognate aminoacyl-transfer RNA (tRNA) molecules. The large subunit (LSU) contains the ribosomal catalytic site termed the peptidyl transferase center (PTC), which catalyzes the formation of peptide bonds, thereby polymerizing the amino acids delivered by tRNAs into a polypeptide chain. The nascent polypeptides leave the ribosome through a tunnel in the LSU and interact with protein factors that function in enzymatic processing, targeting, and the membrane insertion of nascent chains at the exit of the ribosomal tunnel. The polypeptide is Large ribosomal subunit protein uL14 (Candida albicans (strain SC5314 / ATCC MYA-2876) (Yeast)).